Consider the following 456-residue polypeptide: Chaperone protein dnaJ GFA2, mitochondrial (456 aa).

Residues 1 to 89 (MVPSNGAKVL…RSFHGTGSSF (89 aa)) constitute a mitochondrion transit peptide. Positions 94 to 159 (DYYSVLGVSK…EKRDLYDQVG (66 aa)) constitute a J domain. The segment at 225–303 (GCSKTVTFQT…CRGARVVRGQ (79 aa)) adopts a CR-type zinc-finger fold. The Zn(2+) site is built by Cys-238, Cys-241, Cys-255, Cys-258, Cys-277, Cys-280, Cys-291, and Cys-294. 4 CXXCXGXG motif repeats span residues 238 to 245 (CNTCGGQG), 255 to 262 (CKACNGSG), 277 to 284 (CQKCGGAG), and 291 to 298 (CKSCRGAR).

The protein belongs to the DnaJ family. In terms of tissue distribution, widely expressed.

It localises to the mitochondrion. In terms of biological role, chaperone that may play a role in mitochondrial protein folding. Involved in female gametophyte development. Required for cell death of the synergid cells during fertilization process, and fusion of the polar nuclei during megagametogenesis. In Arabidopsis thaliana (Mouse-ear cress), this protein is Chaperone protein dnaJ GFA2, mitochondrial.